The chain runs to 260 residues: Putative protein phosphatase 2C-like protein 44 (260 aa).

Positions 41 to 259 (YYTVDRLSYA…SSISCVVIRF (219 aa)) constitute a PPM-type phosphatase domain.

It belongs to the PP2C family.

This chain is Putative protein phosphatase 2C-like protein 44, found in Arabidopsis thaliana (Mouse-ear cress).